Here is a 544-residue protein sequence, read N- to C-terminus: MAKHIIFDSEARAKLKSGVDTMANAVKVTLGPKGRNVVIDKKYGAPSITKDGISVAKEIELKDPVENLGAQLIKEVASKTADGAGDGTTTATVLAQSIFSAGIKNVAAGANPMDLKRGVDKAIEAVVERLKQNSRKISNSKEIEQVATISANNDSKIGKMIADAMDKVGKDGVITVEEAKGTETEVKVVEGMEFDRGYLSPYFVTNTEKMEAELGNAYILICDKKISVMKELLPILEAISQTGRPLLIIAEDIEGEALATLVVNKIRGALKVAAVKAPGFGDRRKAMLEDIAILTGGTVISEERGYKLENATLDYLGTAEKINIDKENTLIVNGGGKKEDIQARISQIRSQIENTTSDYDKEKLQERLAKLSGGVAILYIGAATEVEMKEKKDRVDDALHATRAAVQEGVVAGGGVALIRTIPALENIEVENEDQATGINIVRTSLEAPLRTIVSNAGGEGAVIVQKIREAQGDFGYNARTGNFENLYEAGVIDPTKVTRLALENAASIASLLLTTECVIADEKEEDKPGVGAPGMGGGMGGMM.

ATP contacts are provided by residues 29–32 (TLGP), Lys50, 86–90 (DGTTT), Gly414, and Asp494.

The protein belongs to the chaperonin (HSP60) family. Forms a cylinder of 14 subunits composed of two heptameric rings stacked back-to-back. Interacts with the co-chaperonin GroES.

The protein localises to the cytoplasm. The catalysed reaction is ATP + H2O + a folded polypeptide = ADP + phosphate + an unfolded polypeptide.. Together with its co-chaperonin GroES, plays an essential role in assisting protein folding. The GroEL-GroES system forms a nano-cage that allows encapsulation of the non-native substrate proteins and provides a physical environment optimized to promote and accelerate protein folding. This Amoebophilus asiaticus (strain 5a2) protein is Chaperonin GroEL.